A 240-amino-acid polypeptide reads, in one-letter code: DNA repair protein RecO (240 aa).

It belongs to the RecO family.

Its function is as follows. Involved in DNA repair and RecF pathway recombination. The protein is DNA repair protein RecO of Pseudoalteromonas atlantica (strain T6c / ATCC BAA-1087).